We begin with the raw amino-acid sequence, 171 residues long: 3-hydroxydecanoyl-[acyl-carrier-protein] dehydratase (171 aa).

Residue His-70 is part of the active site.

It belongs to the thioester dehydratase family. FabA subfamily. Homodimer.

It localises to the cytoplasm. It catalyses the reaction a (3R)-hydroxyacyl-[ACP] = a (2E)-enoyl-[ACP] + H2O. The catalysed reaction is (3R)-hydroxydecanoyl-[ACP] = (2E)-decenoyl-[ACP] + H2O. It carries out the reaction (2E)-decenoyl-[ACP] = (3Z)-decenoyl-[ACP]. The protein operates within lipid metabolism; fatty acid biosynthesis. Its function is as follows. Necessary for the introduction of cis unsaturation into fatty acids. Catalyzes the dehydration of (3R)-3-hydroxydecanoyl-ACP to E-(2)-decenoyl-ACP and then its isomerization to Z-(3)-decenoyl-ACP. Can catalyze the dehydratase reaction for beta-hydroxyacyl-ACPs with saturated chain lengths up to 16:0, being most active on intermediate chain length. The polypeptide is 3-hydroxydecanoyl-[acyl-carrier-protein] dehydratase (Histophilus somni (strain 129Pt) (Haemophilus somnus)).